The following is a 68-amino-acid chain: Large ribosomal subunit protein uL29 (68 aa).

It belongs to the universal ribosomal protein uL29 family.

The chain is Large ribosomal subunit protein uL29 from Streptococcus pneumoniae (strain JJA).